An 867-amino-acid chain; its full sequence is Cadherin-related family member 1 (867 aa).

Residues 1-21 (MGRGPPAVLAPWMLFLSLAQA) form the signal peptide. At 22-701 (NFAPHFFDNG…LMQTKDNPMK (680 aa)) the chain is on the extracellular side. 6 Cadherin domains span residues 36-135 (NGNM…APRF), 136-247 (IQEP…GPVF), 248-354 (VGTP…PPTF), 360-473 (PQNR…VPKF), 474-577 (TSHY…YPQF), and 574-689 (YPQF…SPMA). Residues asparagine 58 and asparagine 89 are each glycosylated (N-linked (GlcNAc...) asparagine). 2 N-linked (GlcNAc...) asparagine glycosylation sites follow: asparagine 288 and asparagine 297. Residues 702–722 (AVGVLAGIMAIIVAITVLIST) traverse the membrane as a helical segment. Residues 723–867 (ATFWRNKKSN…KKNLHSKAYF (145 aa)) are Cytoplasmic-facing. The tract at residues 767–843 (KFVLREAPPN…VAKRKAVGSP (77 aa)) is disordered. Polar residues predominate over residues 777-786 (ENCNNNSRGS). A compositionally biased stretch (pro residues) spans 790–802 (PQAPAPPPPPSPA).

In terms of assembly, interacts with PROM1. Undergoes proteolytic cleavage; produces a soluble 95 kDa N-terminal fragment and a 25 kDa cell-associated C-terminal fragment. As to expression, expressed in photoreceptor cells of the outer nuclear layer of the retina.

It localises to the cell membrane. Its function is as follows. Potential calcium-dependent cell-adhesion protein. May be required for the structural integrity of the outer segment (OS) of photoreceptor cells. The polypeptide is Cadherin-related family member 1 (CDHR1) (Bos taurus (Bovine)).